We begin with the raw amino-acid sequence, 247 residues long: Segregation and condensation protein A (247 aa).

The protein belongs to the ScpA family. As to quaternary structure, component of a cohesin-like complex composed of ScpA, ScpB and the Smc homodimer, in which ScpA and ScpB bind to the head domain of Smc. The presence of the three proteins is required for the association of the complex with DNA.

It is found in the cytoplasm. Participates in chromosomal partition during cell division. May act via the formation of a condensin-like complex containing Smc and ScpB that pull DNA away from mid-cell into both cell halves. In Lactobacillus gasseri (strain ATCC 33323 / DSM 20243 / BCRC 14619 / CIP 102991 / JCM 1131 / KCTC 3163 / NCIMB 11718 / NCTC 13722 / AM63), this protein is Segregation and condensation protein A.